The sequence spans 325 residues: Cytochrome c biogenesis protein CcsA (325 aa).

Transmembrane regions (helical) follow at residues T14–L34, G36–L56, I68–L88, L97–L117, V142–V162, V233–N253, W260–L280, and A294–L314.

Belongs to the CcmF/CycK/Ccl1/NrfE/CcsA family. May interact with ccs1.

The protein localises to the cellular thylakoid membrane. Its function is as follows. Required during biogenesis of c-type cytochromes (cytochrome c6 and cytochrome f) at the step of heme attachment. The chain is Cytochrome c biogenesis protein CcsA from Synechococcus sp. (strain ATCC 27144 / PCC 6301 / SAUG 1402/1) (Anacystis nidulans).